A 316-amino-acid polypeptide reads, in one-letter code: Acetaldehyde dehydrogenase (316 aa).

An NAD(+)-binding site is contributed by 11–14 (SGNI). Cysteine 131 acts as the Acyl-thioester intermediate in catalysis. Residues 162 to 170 (SAGPGTRAN) and asparagine 289 contribute to the NAD(+) site.

Belongs to the acetaldehyde dehydrogenase family. Interacts with MhpE.

It catalyses the reaction acetaldehyde + NAD(+) + CoA = acetyl-CoA + NADH + H(+). It participates in aromatic compound metabolism; 3-phenylpropanoate degradation. Catalyzes the conversion of acetaldehyde to acetyl-CoA, using NAD(+) and coenzyme A. Is the final enzyme in the meta-cleavage pathway for the degradation of aromatic compounds. The protein is Acetaldehyde dehydrogenase of Shigella sonnei (strain Ss046).